The primary structure comprises 448 residues: Exodeoxyribonuclease 7 large subunit (448 aa).

It belongs to the XseA family. Heterooligomer composed of large and small subunits.

It is found in the cytoplasm. It localises to the nucleoid. It carries out the reaction Exonucleolytic cleavage in either 5'- to 3'- or 3'- to 5'-direction to yield nucleoside 5'-phosphates.. Functionally, bidirectionally degrades single-stranded DNA into large acid-insoluble oligonucleotides, which are then degraded further into small acid-soluble oligonucleotides. The protein is Exodeoxyribonuclease 7 large subunit of Bacillus subtilis (strain 168).